A 269-amino-acid chain; its full sequence is Tryptophan synthase alpha chain (269 aa).

Active-site proton acceptor residues include E49 and D60.

It belongs to the TrpA family. In terms of assembly, tetramer of two alpha and two beta chains.

The enzyme catalyses (1S,2R)-1-C-(indol-3-yl)glycerol 3-phosphate + L-serine = D-glyceraldehyde 3-phosphate + L-tryptophan + H2O. The protein operates within amino-acid biosynthesis; L-tryptophan biosynthesis; L-tryptophan from chorismate: step 5/5. In terms of biological role, the alpha subunit is responsible for the aldol cleavage of indoleglycerol phosphate to indole and glyceraldehyde 3-phosphate. In Pseudomonas putida (strain ATCC 700007 / DSM 6899 / JCM 31910 / BCRC 17059 / LMG 24140 / F1), this protein is Tryptophan synthase alpha chain.